The following is a 244-amino-acid chain: 5-oxoprolinase subunit A (244 aa).

The protein belongs to the LamB/PxpA family. As to quaternary structure, forms a complex composed of PxpA, PxpB and PxpC.

It carries out the reaction 5-oxo-L-proline + ATP + 2 H2O = L-glutamate + ADP + phosphate + H(+). In terms of biological role, catalyzes the cleavage of 5-oxoproline to form L-glutamate coupled to the hydrolysis of ATP to ADP and inorganic phosphate. The chain is 5-oxoprolinase subunit A from Salmonella agona (strain SL483).